The following is a 332-amino-acid chain: Biotin synthase (332 aa).

Residues 53-282 form the Radical SAM core domain; sequence HFGKKVKLNM…TKEIRISGGR (230 aa). [4Fe-4S] cluster is bound by residues C71, C75, and C78. [2Fe-2S] cluster is bound by residues C115, C147, C207, and R277.

Belongs to the radical SAM superfamily. Biotin synthase family. As to quaternary structure, homodimer. It depends on [4Fe-4S] cluster as a cofactor. [2Fe-2S] cluster serves as cofactor.

It carries out the reaction (4R,5S)-dethiobiotin + (sulfur carrier)-SH + 2 reduced [2Fe-2S]-[ferredoxin] + 2 S-adenosyl-L-methionine = (sulfur carrier)-H + biotin + 2 5'-deoxyadenosine + 2 L-methionine + 2 oxidized [2Fe-2S]-[ferredoxin]. The protein operates within cofactor biosynthesis; biotin biosynthesis; biotin from 7,8-diaminononanoate: step 2/2. In terms of biological role, catalyzes the conversion of dethiobiotin (DTB) to biotin by the insertion of a sulfur atom into dethiobiotin via a radical-based mechanism. In Bacillus cereus (strain B4264), this protein is Biotin synthase.